A 309-amino-acid polypeptide reads, in one-letter code: Glutaminase (309 aa).

Positions 64, 114, 160, 167, 191, 243, and 261 each coordinate substrate.

Belongs to the glutaminase family. In terms of assembly, homotetramer.

The catalysed reaction is L-glutamine + H2O = L-glutamate + NH4(+). This is Glutaminase from Methylobacterium sp. (strain 4-46).